A 596-amino-acid chain; its full sequence is PDZ and LIM domain protein 5 (596 aa).

An N-acetylserine modification is found at serine 2. Serine 2 carries the phosphoserine modification. In terms of domain architecture, PDZ spans 2–85 (SNYSVSLVGP…SLNMTLQRAS (84 aa)). N6-acetyllysine; alternate is present on lysine 89. The residue at position 89 (lysine 89) is an N6-succinyllysine; alternate. Residue lysine 89 forms a Glycyl lysine isopeptide (Lys-Gly) (interchain with G-Cter in SUMO2); alternate linkage. Residues serine 111, serine 134, and serine 137 each carry the phosphoserine modification. Disordered regions lie at residues 121 to 165 (NNMA…SPSP), 196 to 240 (AGKT…GPPR), and 255 to 340 (THSD…RPGV). Residues 134–143 (SVSSPKVTSI) are compositionally biased toward polar residues. Positions 144–165 (PSPSSAFTPAHATTSSHASPSP) are enriched in low complexity. Polar residues-rich tracts occupy residues 205 to 219 (RQPTVTSVCSETSQE) and 226 to 237 (RGSQGDSKQQNG). 2 positions are modified to phosphoserine: serine 228 and serine 260. 2 stretches are compositionally biased toward basic and acidic residues: residues 258–273 (DASKKRLIEDTEDWRP) and 293–304 (EHLKESEADNTK). Residues 305–335 (KANNSQEPSPQLASSVASTRSMPESLDSPTS) show a composition bias toward polar residues. 3 positions are modified to phosphoserine: serine 309, serine 313, and serine 322. Lysine 350 is subject to N6-acetyllysine. Residues 354–381 (STGVIKSPSWQRPNQGVPSTGRISNSAT) form a disordered region. Phosphoserine is present on residues serine 360 and serine 362. Positions 361–381 (PSWQRPNQGVPSTGRISNSAT) are enriched in polar residues. 3 consecutive LIM zinc-binding domains span residues 418–477 (PMCA…FFAP), 477–536 (PECG…LFGT), and 536–596 (TICH…SVNF).

In terms of assembly, interacts with various PKC isoforms through the LIM domains. Interacts with actin and alpha-actinin through the PDZ domain. Interacts (via LIM domains) with SIPA1L1/SPAR; this interaction may occur preferentially with isoform 1. In terms of tissue distribution, heart and skeletal muscle specific. Expression is commonly increased in the brain of patients with bipolar disorder, schizophrenia, and major depression.

It localises to the postsynaptic density. The protein localises to the presynapse. The protein resides in the postsynapse. It is found in the cytoplasm. Its subcellular location is the cytosol. Its function is as follows. May play an important role in the heart development by scaffolding PKC to the Z-disk region. May play a role in the regulation of cardiomyocyte expansion. Isoforms lacking the LIM domains may negatively modulate the scaffolding activity of isoform 1. Overexpression promotes the development of heart hypertrophy. Contributes to the regulation of dendritic spine morphogenesis in neurons. May be required to restrain postsynaptic growth of excitatory synapses. Isoform 1, but not isoform 2, expression favors spine thinning and elongation. In Homo sapiens (Human), this protein is PDZ and LIM domain protein 5.